The following is a 420-amino-acid chain: Glucose-1-phosphate adenylyltransferase (420 aa).

Alpha-D-glucose 1-phosphate-binding positions include tyrosine 107, glycine 172, 187–188, and serine 205; that span reads EK.

Belongs to the bacterial/plant glucose-1-phosphate adenylyltransferase family. In terms of assembly, homotetramer.

The catalysed reaction is alpha-D-glucose 1-phosphate + ATP + H(+) = ADP-alpha-D-glucose + diphosphate. The protein operates within glycan biosynthesis; glycogen biosynthesis. Its function is as follows. Involved in the biosynthesis of ADP-glucose, a building block required for the elongation reactions to produce glycogen. Catalyzes the reaction between ATP and alpha-D-glucose 1-phosphate (G1P) to produce pyrophosphate and ADP-Glc. This Rhizobium leguminosarum bv. trifolii (strain WSM2304) protein is Glucose-1-phosphate adenylyltransferase.